Here is a 155-residue protein sequence, read N- to C-terminus: Small ribosomal subunit protein uS7c (155 aa).

It belongs to the universal ribosomal protein uS7 family. As to quaternary structure, part of the 30S ribosomal subunit.

It is found in the plastid. Its subcellular location is the chloroplast. One of the primary rRNA binding proteins, it binds directly to 16S rRNA where it nucleates assembly of the head domain of the 30S subunit. The protein is Small ribosomal subunit protein uS7c (rps7) of Metasequoia glyptostroboides (Dawn redwood).